We begin with the raw amino-acid sequence, 469 residues long: Phosphoglucosamine mutase (469 aa).

Serine 117 serves as the catalytic Phosphoserine intermediate. Positions 117, 263, 265, and 267 each coordinate Mg(2+). Serine 117 bears the Phosphoserine mark.

This sequence belongs to the phosphohexose mutase family. It depends on Mg(2+) as a cofactor. Post-translationally, activated by phosphorylation.

The catalysed reaction is alpha-D-glucosamine 1-phosphate = D-glucosamine 6-phosphate. In terms of biological role, catalyzes the conversion of glucosamine-6-phosphate to glucosamine-1-phosphate. This chain is Phosphoglucosamine mutase, found in Anaeromyxobacter sp. (strain Fw109-5).